A 609-amino-acid polypeptide reads, in one-letter code: UvrABC system protein C (609 aa).

The GIY-YIG domain occupies 15-92 (TGSGVYQMQD…IKQFRPRYNV (78 aa)). A UVR domain is found at 202–237 (DQVIIKLTERMEVASENLVFEEAAHYRDQIRQLRRL).

The protein belongs to the UvrC family. Interacts with UvrB in an incision complex.

The protein localises to the cytoplasm. The UvrABC repair system catalyzes the recognition and processing of DNA lesions. UvrC both incises the 5' and 3' sides of the lesion. The N-terminal half is responsible for the 3' incision and the C-terminal half is responsible for the 5' incision. This is UvrABC system protein C from Coxiella burnetii (strain CbuK_Q154) (Coxiella burnetii (strain Q154)).